Here is a 194-residue protein sequence, read N- to C-terminus: Large ribosomal subunit protein bL25 (194 aa).

The protein belongs to the bacterial ribosomal protein bL25 family. CTC subfamily. In terms of assembly, part of the 50S ribosomal subunit; part of the 5S rRNA/L5/L18/L25 subcomplex. Contacts the 5S rRNA. Binds to the 5S rRNA independently of L5 and L18.

Its function is as follows. This is one of the proteins that binds to the 5S RNA in the ribosome where it forms part of the central protuberance. The protein is Large ribosomal subunit protein bL25 of Thermobifida fusca (strain YX).